A 321-amino-acid chain; its full sequence is UDP-3-O-acylglucosamine N-acyltransferase (321 aa).

His231 acts as the Proton acceptor in catalysis.

The protein belongs to the transferase hexapeptide repeat family. LpxD subfamily. Homotrimer.

The catalysed reaction is a UDP-3-O-[(3R)-3-hydroxyacyl]-alpha-D-glucosamine + a (3R)-hydroxyacyl-[ACP] = a UDP-2-N,3-O-bis[(3R)-3-hydroxyacyl]-alpha-D-glucosamine + holo-[ACP] + H(+). It functions in the pathway bacterial outer membrane biogenesis; LPS lipid A biosynthesis. In terms of biological role, catalyzes the N-acylation of UDP-3-O-acylglucosamine using 3-hydroxyacyl-ACP as the acyl donor. Is involved in the biosynthesis of lipid A, a phosphorylated glycolipid that anchors the lipopolysaccharide to the outer membrane of the cell. The chain is UDP-3-O-acylglucosamine N-acyltransferase from Campylobacter jejuni subsp. jejuni serotype O:2 (strain ATCC 700819 / NCTC 11168).